The sequence spans 577 residues: Arginine--tRNA ligase (577 aa).

The short motif at 122 to 132 (PNVAKEMHVGH) is the 'HIGH' region element.

Belongs to the class-I aminoacyl-tRNA synthetase family. As to quaternary structure, monomer.

The protein localises to the cytoplasm. It carries out the reaction tRNA(Arg) + L-arginine + ATP = L-arginyl-tRNA(Arg) + AMP + diphosphate. The sequence is that of Arginine--tRNA ligase from Escherichia coli O139:H28 (strain E24377A / ETEC).